The following is a 442-amino-acid chain: 3-phosphoshikimate 1-carboxyvinyltransferase (442 aa).

Positions 25, 26, and 30 each coordinate 3-phosphoshikimate. Phosphoenolpyruvate is bound at residue lysine 25. The phosphoenolpyruvate site is built by glycine 96 and arginine 124. Residues serine 171, serine 172, glutamine 173, serine 203, aspartate 325, and lysine 352 each contribute to the 3-phosphoshikimate site. Glutamine 173 is a binding site for phosphoenolpyruvate. Aspartate 325 (proton acceptor) is an active-site residue. Phosphoenolpyruvate contacts are provided by arginine 356, arginine 400, and lysine 425.

This sequence belongs to the EPSP synthase family. Monomer.

The protein resides in the cytoplasm. The enzyme catalyses 3-phosphoshikimate + phosphoenolpyruvate = 5-O-(1-carboxyvinyl)-3-phosphoshikimate + phosphate. Its pathway is metabolic intermediate biosynthesis; chorismate biosynthesis; chorismate from D-erythrose 4-phosphate and phosphoenolpyruvate: step 6/7. Functionally, catalyzes the transfer of the enolpyruvyl moiety of phosphoenolpyruvate (PEP) to the 5-hydroxyl of shikimate-3-phosphate (S3P) to produce enolpyruvyl shikimate-3-phosphate and inorganic phosphate. The protein is 3-phosphoshikimate 1-carboxyvinyltransferase of Bordetella parapertussis (strain 12822 / ATCC BAA-587 / NCTC 13253).